We begin with the raw amino-acid sequence, 134 residues long: Small ribosomal subunit protein uS8c (134 aa).

The protein belongs to the universal ribosomal protein uS8 family. In terms of assembly, part of the 30S ribosomal subunit.

The protein localises to the plastid. Its subcellular location is the chloroplast. Functionally, one of the primary rRNA binding proteins, it binds directly to 16S rRNA central domain where it helps coordinate assembly of the platform of the 30S subunit. The sequence is that of Small ribosomal subunit protein uS8c (rps8) from Populus alba (White poplar).